Here is a 45-residue protein sequence, read N- to C-terminus: Large ribosomal subunit protein bL34 (45 aa).

The tract at residues 1–45 (MTKRTFGGTSRKRKRVSGFRVRMRSHTGRRVIRTRRKRGRSRLAA) is disordered. Residues 10–45 (SRKRKRVSGFRVRMRSHTGRRVIRTRRKRGRSRLAA) are compositionally biased toward basic residues.

The protein belongs to the bacterial ribosomal protein bL34 family.

The polypeptide is Large ribosomal subunit protein bL34 (Synechococcus sp. (strain CC9311)).